A 163-amino-acid chain; its full sequence is Nucleotide-binding protein NT01EI_1072 (163 aa).

The protein belongs to the YajQ family.

Functionally, nucleotide-binding protein. The chain is Nucleotide-binding protein NT01EI_1072 from Edwardsiella ictaluri (strain 93-146).